The chain runs to 342 residues: Glycerol-1-phosphate dehydrogenase [NAD(P)+] (342 aa).

NAD(+)-binding positions include 84 to 88 and 106 to 109; these read GRPID and TAAS. Aspartate 111 lines the substrate pocket. An NAD(+)-binding site is contributed by serine 115. Aspartate 160 is a substrate binding site. Aspartate 160 and histidine 241 together coordinate Zn(2+). Residue histidine 245 coordinates substrate. Histidine 260 is a binding site for Zn(2+).

The protein belongs to the glycerol-1-phosphate dehydrogenase family. Homodimer. Requires Zn(2+) as cofactor.

The protein resides in the cytoplasm. The enzyme catalyses sn-glycerol 1-phosphate + NAD(+) = dihydroxyacetone phosphate + NADH + H(+). It carries out the reaction sn-glycerol 1-phosphate + NADP(+) = dihydroxyacetone phosphate + NADPH + H(+). It participates in membrane lipid metabolism; glycerophospholipid metabolism. Functionally, catalyzes the NAD(P)H-dependent reduction of dihydroxyacetonephosphate (DHAP or glycerone phosphate) to glycerol 1-phosphate (G1P). The G1P thus generated is used as the glycerophosphate backbone of phospholipids in the cellular membranes of Archaea. This is Glycerol-1-phosphate dehydrogenase [NAD(P)+] from Pyrobaculum aerophilum (strain ATCC 51768 / DSM 7523 / JCM 9630 / CIP 104966 / NBRC 100827 / IM2).